Reading from the N-terminus, the 138-residue chain is UPF0201 protein TK1335 (138 aa).

This sequence belongs to the UPF0201 family.

The chain is UPF0201 protein TK1335 from Thermococcus kodakarensis (strain ATCC BAA-918 / JCM 12380 / KOD1) (Pyrococcus kodakaraensis (strain KOD1)).